A 761-amino-acid chain; its full sequence is Autophagy-related protein 13 (761 aa).

Composition is skewed to low complexity over residues 1-10 (MLSDFKQQQQ), 290-303 (SSSV…TSLK), and 327-340 (STSP…ISQP). Disordered stretches follow at residues 1 to 25 (MLSD…HDDT), 277 to 367 (FHKR…SNKS), 398 to 456 (ISGT…QSDL), 488 to 507 (DLRL…NMSI), 544 to 642 (HSSR…SSIS), and 691 to 761 (YQNV…SRNF). Polar residues-rich tracts occupy residues 344-367 (PIQN…SNKS) and 400-411 (GTSVPRSFSSST). Low complexity predominate over residues 429 to 444 (RFASSFGSRASRRYSS). Residues 445 to 456 (TSIRQQTPQSDL) are compositionally biased toward polar residues. Positions 566–590 (QQQQQQQQNQQQSQSPHTNTTSSIH) are enriched in low complexity. A compositionally biased stretch (basic and acidic residues) spans 600–613 (RMKDARPRSEDHQQ). Over residues 614–631 (TKFSAARRSSNISPTTAV) the composition is skewed to polar residues. A compositionally biased stretch (low complexity) spans 632–642 (PSSIGTPSSIS). Residues 695–709 (FDDDDEDDNDEEEGD) show a composition bias toward acidic residues. Basic and acidic residues predominate over residues 710–720 (REGNQLHEGRN). The segment covering 721–730 (STESSQNQSK) has biased composition (polar residues).

Belongs to the ATG13 family. Fungi subfamily. Interacts with ATG1 to form the ATG1-ATG13 kinase complex.

It localises to the cytoplasm. The protein localises to the preautophagosomal structure. Functionally, plays a key role in autophagy. Activates the atg1 kinase in a nutritional condition dependent manner through the TOR pathway, leading to autophagy. Also involved in cytoplasm to vacuole transport (Cvt) and more specifically in Cvt vesicle formation. Seems to play a role in the switching machinery regulating the conversion between the Cvt pathway and autophagy. Finally, plays an important role in biofilm formation and resistance to antifungal compounds such as fluconazole, itraconazole, terbinafine and caspofungin. The chain is Autophagy-related protein 13 from Candida albicans (strain SC5314 / ATCC MYA-2876) (Yeast).